A 222-amino-acid chain; its full sequence is uncharacterized protein (222 aa).

This is an uncharacterized protein from Acanthamoeba polyphaga mimivirus (APMV).